The sequence spans 522 residues: Mediator of RNA polymerase II transcription subunit 1.2 (522 aa).

Residues 13–40 are a coiled coil; that stretch reads LLEQRKNQELNIEHIDEEMRLEQVRQAA.

Belongs to the Mediator complex subunit 1 family. As to quaternary structure, component of the Mediator complex.

The protein resides in the nucleus. In terms of biological role, component of the Mediator complex, a coactivator involved in the regulated transcription of nearly all RNA polymerase II-dependent genes. Mediator functions as a bridge to convey information from gene-specific regulatory proteins to the basal RNA polymerase II transcription machinery. Mediator is recruited to promoters by direct interactions with regulatory proteins and serves as a scaffold for the assembly of a functional preinitiation complex with RNA polymerase II and the general transcription factors. In Caenorhabditis elegans, this protein is Mediator of RNA polymerase II transcription subunit 1.2 (mdt-1.2).